The sequence spans 78 residues: Acyl carrier protein (78 aa).

The Carrier domain maps to 2-77; sequence SEIAQKVKSI…QAIAYLEQHV (76 aa). The residue at position 37 (Ser-37) is an O-(pantetheine 4'-phosphoryl)serine.

The protein belongs to the acyl carrier protein (ACP) family. In terms of processing, 4'-phosphopantetheine is transferred from CoA to a specific serine of apo-ACP by AcpS. This modification is essential for activity because fatty acids are bound in thioester linkage to the sulfhydryl of the prosthetic group.

The protein localises to the cytoplasm. It participates in lipid metabolism; fatty acid biosynthesis. Carrier of the growing fatty acid chain in fatty acid biosynthesis. This Cytophaga hutchinsonii (strain ATCC 33406 / DSM 1761 / CIP 103989 / NBRC 15051 / NCIMB 9469 / D465) protein is Acyl carrier protein.